Consider the following 227-residue polypeptide: Acyl-protein thioesterase 1 (227 aa).

Catalysis depends on charge relay system residues Ser-119, Asp-173, and His-207.

Belongs to the AB hydrolase superfamily. AB hydrolase 2 family.

Its subcellular location is the cytoplasm. The protein resides in the nucleus. The enzyme catalyses S-hexadecanoyl-L-cysteinyl-[protein] + H2O = L-cysteinyl-[protein] + hexadecanoate + H(+). Hydrolyzes fatty acids from S-acylated cysteine residues in proteins with a strong preference for palmitoylated G-alpha proteins over other acyl substrates. Mediates the deacylation of G-alpha proteins such as GPA1 in vivo, but has weak or no activity toward palmitoylated Ras proteins. Has weak lysophospholipase activity in vitro; however such activity may not exist in vivo. In Yarrowia lipolytica (strain CLIB 122 / E 150) (Yeast), this protein is Acyl-protein thioesterase 1.